Consider the following 724-residue polypeptide: Hyperosmolality-gated Ca2+ permeable channel 3.1 (724 aa).

The Extracellular segment spans residues 1–4 (MEFG). A helical transmembrane segment spans residues 5–25 (SFLVSLGTSFVIFVILMLLFT). At 26–85 (WLSRKSGNAPIYYPNRILKGLEPWEGTSLTRNPFAWMREALTSSEQDVVNLSGVDTAVHF) the chain is on the cytoplasmic side. A helical transmembrane segment spans residues 86–108 (VFLSTVLGIFACSSLLLLPTLLP). Residues 109–147 (LAATDNNIKNTKNATDTTSKGTFSQLDNLSMANITKKSS) lie on the Extracellular side of the membrane. A helical transmembrane segment spans residues 148-170 (RLWAFLGAVYWISLVTYFFLWKA). Residues 171–358 (YKHVSSLRAQ…WQNLNIKLFS (188 aa)) are Cytoplasmic-facing. Positions 241–309 (EKLEGYKKKL…KAVLAEKQQT (69 aa)) form a coiled coil. A helical membrane pass occupies residues 359–385 (RIIRQYFIYFFVAVTILFYMIPIAFVS). The Extracellular portion of the chain corresponds to 386–411 (AITTLKNLQRIIPFIKPVVEITAIRT). The chain crosses the membrane as a helical span at residues 412–439 (VLESFLPQIALIVFLAMLPKLLLFLSKA). Residues 440 to 448 (EGIPSQSHA) are Cytoplasmic-facing. A helical membrane pass occupies residues 449–472 (IRAASGKYFYFSVFNVFIGVTLAG). At 473–497 (TLFNTVKDIAKNPKLDMIINLLATS) the chain is on the extracellular side. The chain crosses the membrane as a helical span at residues 498-529 (LPKSATFFLTYVALKFFIGYGLELSRIIPLII). The Cytoplasmic portion of the chain corresponds to 530-554 (FHLKKKYLCKTEAEVKEAWYPGDLS). The chain crosses the membrane as a helical span at residues 555–574 (YATRVPGDMLILTITFCYSV). Residue Ile575 is a topological domain, extracellular. A helical membrane pass occupies residues 576-594 (APLILIFGITYFGLGWLVL). The Cytoplasmic portion of the chain corresponds to 595-612 (RNQALKVYVPSYESYGRM). A helical transmembrane segment spans residues 613-636 (WPHIHQRILAALFLFQVVMFGYLG). At 637-641 (AKTFF) the chain is on the extracellular side. A helical transmembrane segment spans residues 642–662 (YTALVIPLIITSLIFGYVCRQ). The Cytoplasmic portion of the chain corresponds to 663–724 (KFYGGFEHTA…YQDFNAIAGV (62 aa)).

It belongs to the CSC1 (TC 1.A.17) family. In terms of assembly, homodimer.

Its subcellular location is the membrane. Acts as a hyperosmolarity-gated non-selective cation channel that permeates Ca(2+) ions. Mechanosensitive ion channel that converts mechanical stimuli into a flow of ions: activated in response to membrane stretch. Not activated in response to membrane poke. The protein is Hyperosmolality-gated Ca2+ permeable channel 3.1 of Arabidopsis thaliana (Mouse-ear cress).